Here is a 346-residue protein sequence, read N- to C-terminus: 3 beta-hydroxysteroid dehydrogenase/Delta 5--&gt;4-isomerase (346 aa).

Tyr147 serves as the catalytic Proton acceptor. Residue Lys151 coordinates NAD(+).

This sequence belongs to the 3-beta-HSD family.

The enzyme catalyses a 3beta-hydroxy-Delta(5)-steroid + NAD(+) = a 3-oxo-Delta(5)-steroid + NADH + H(+). The catalysed reaction is a 3-oxo-Delta(5)-steroid = a 3-oxo-Delta(4)-steroid. It participates in lipid metabolism; steroid biosynthesis. Functionally, catalyzes the oxidative conversion of Delta(5)-ene-3-beta-hydroxy steroid, and the oxidative conversion of ketosteroids. The 3-beta-HSD enzymatic system plays a crucial role in the biosynthesis of all classes of hormonal steroids. During viral infection, steroid production contributes to virulence by inhibiting the host inflammatory response. The protein is 3 beta-hydroxysteroid dehydrogenase/Delta 5--&gt;4-isomerase (OPG174) of Homo sapiens (Human).